We begin with the raw amino-acid sequence, 382 residues long: Dual-specificity RNA methyltransferase RlmN (382 aa).

The Proton acceptor role is filled by Glu96. The region spanning 102 to 340 is the Radical SAM core domain; the sequence is QNGRGTLCVS…VTVRTTRGDD (239 aa). Cysteines 109 and 345 form a disulfide. [4Fe-4S] cluster is bound by residues Cys116, Cys120, and Cys123. Residues 170–171, Ser202, 224–226, and Asn302 each bind S-adenosyl-L-methionine; these read GE and SLH. Cys345 (S-methylcysteine intermediate) is an active-site residue.

This sequence belongs to the radical SAM superfamily. RlmN family. Requires [4Fe-4S] cluster as cofactor.

The protein resides in the cytoplasm. The enzyme catalyses adenosine(2503) in 23S rRNA + 2 reduced [2Fe-2S]-[ferredoxin] + 2 S-adenosyl-L-methionine = 2-methyladenosine(2503) in 23S rRNA + 5'-deoxyadenosine + L-methionine + 2 oxidized [2Fe-2S]-[ferredoxin] + S-adenosyl-L-homocysteine. It catalyses the reaction adenosine(37) in tRNA + 2 reduced [2Fe-2S]-[ferredoxin] + 2 S-adenosyl-L-methionine = 2-methyladenosine(37) in tRNA + 5'-deoxyadenosine + L-methionine + 2 oxidized [2Fe-2S]-[ferredoxin] + S-adenosyl-L-homocysteine. Functionally, specifically methylates position 2 of adenine 2503 in 23S rRNA and position 2 of adenine 37 in tRNAs. m2A2503 modification seems to play a crucial role in the proofreading step occurring at the peptidyl transferase center and thus would serve to optimize ribosomal fidelity. The protein is Dual-specificity RNA methyltransferase RlmN of Ectopseudomonas mendocina (strain ymp) (Pseudomonas mendocina).